The sequence spans 88 residues: UPF0297 protein Bcer98_3100 (88 aa).

This sequence belongs to the UPF0297 family.

This Bacillus cytotoxicus (strain DSM 22905 / CIP 110041 / 391-98 / NVH 391-98) protein is UPF0297 protein Bcer98_3100.